Here is a 4499-residue protein sequence, read N- to C-terminus: Dynein alpha chain, flagellar outer arm (4499 aa).

Positions 1–1677 are stem; the sequence is MSIFWEVPNA…RIRICDASFP (1677 aa). Kelch repeat units follow at residues 29-84, 86-135, 137-183, 199-245, 253-304, and 307-358; these read RFVL…ALDD, RLLV…RFGS, VFIF…RFDH, KLLI…VCDG, KVFS…FDVK, and SLLI…IRGL. A Filamin repeat occupies 425–534; sequence FANTAARNCI…IRGSPFTVKC (110 aa). Kelch repeat units lie at residues 562 to 608 and 610 to 661; these read ELVL…VLSD and ELVV…AVSA. The interval 653–720 is disordered; sequence PKGAAAVSAE…SRPVSAKPAP (68 aa). The span at 655–689 shows a compositional bias: low complexity; sequence GAAAVSAEPSAEPAAEPAAEPAAEPDADAPAAEPA. Acidic residues predominate over residues 690 to 705; it reads AEGEEGAVPAEGEEGA. 2 Kelch repeats span residues 750 to 801 and 864 to 913; these read LYVM…ATGN and KLFL…TLSG. Coiled coils occupy residues 1261-1334 and 1382-1450; these read ELHK…MIAN and KKEL…RRAF. AAA regions lie at residues 1678-1921 and 1981-2225; these read YGYE…VLVV and DVIV…KSYS. Residues 1716–1723 and 2019–2026 contribute to the ATP site; these read GPAGTGKT and GPTGTGRT. Residues 2269 to 2317 form a Kelch 11 repeat; sequence MIWAFGGGLVEKDGIPYRRNFDKWFKQTWTTVKIPGKGTVYDYFVNPKT. AAA regions lie at residues 2331 to 2577 and 2679 to 2928; these read DYDG…VFQG and EYNE…ERRY. 2369 to 2376 serves as a coordination point for ATP; that stretch reads GGAGVGKT. Positions 2655–2688 form a coiled coil; sequence LADKAYDEVADYTSLYKTLTEALNEYNETNAAMD. Residue 2717 to 2724 coordinates ATP; it reads GVGGSGKQ. A coiled-coil region spans residues 3003–3023; the sequence is VGVEKEKVNAENAAAQVEAEK. The tract at residues 3003–3262 is stalk; that stretch reads VGVEKEKVNA…ERWALTVEQL (260 aa). The Kelch 12 repeat unit spans residues 3070–3117; that stretch reads LKKPPPGVDDITAVVIILLENNPKDKSWQAAQKLMNNVDKFLERVKSF. Coiled-coil stretches lie at residues 3170-3262 and 3486-3515; these read DVVQ…VEQL and NKER…ELED. Residues 3320–3550 form an AAA 5 region; sequence LVDDALVAGW…AKRVSTEISE (231 aa). The disordered stretch occupies residues 3614 to 3687; sequence GRKKGKGLKK…VGDAEDEDDE (74 aa). Basic and acidic residues predominate over residues 3630–3653; the sequence is QPMDHQSLMEKARRSSGVGDRRPS. Residues 3843–4082 are AAA 6; it reads LQNFCEHMMG…LTTCGDVLYN (240 aa).

Belongs to the dynein heavy chain family. As to quaternary structure, consists of at least 3 heavy chains (alpha, beta and gamma), 2 intermediate chains and 8 light chains.

It is found in the cell projection. It localises to the cilium. The protein resides in the flagellum. The protein localises to the cytoplasm. Its subcellular location is the cytoskeleton. It is found in the flagellum axoneme. In terms of biological role, force generating protein of eukaryotic cilia and flagella. Produces force towards the minus ends of microtubules. Dynein has ATPase activity; the force-producing power stroke is thought to occur on release of ADP. This chain is Dynein alpha chain, flagellar outer arm (ODA11), found in Chlamydomonas reinhardtii (Chlamydomonas smithii).